Reading from the N-terminus, the 103-residue chain is MVKVIDIGRVVVKVLGREAGRKAVVVDIVDENYVVITGPKPITGVKRRRVNINHIEPTDKKIDIKRGASDDEVAKAIEAAGLVEYMRERVKPSFVGITKAETK.

Belongs to the eukaryotic ribosomal protein eL14 family.

This is Large ribosomal subunit protein eL14 from Pyrobaculum aerophilum (strain ATCC 51768 / DSM 7523 / JCM 9630 / CIP 104966 / NBRC 100827 / IM2).